Consider the following 702-residue polypeptide: Protein sepa-1 (702 aa).

The interval 39 to 160 is required for self-association and interaction with pgl-3; that stretch reads RQRFCYEKTD…KESTSYGQFR (122 aa). Short sequence motifs (LIR) lie at residues 107-110, 247-250, and 298-301; these read FVEV, FQKI, and FGFV. A disordered region spans residues 450–471; it reads AKDPEEPTTAASEGGNTYGYQE. Over residues 458-468 the composition is skewed to polar residues; the sequence is TAASEGGNTYG. Positions 469–472 match the LIR 4 motif; it reads YQEL. The stretch at 508 to 543 forms a coiled coil; that stretch reads AAMDKKKKRRELKSRLNKINAQIDELEKRRMERAGK. Positions 545–564 are disordered; that stretch reads QVVSSSVPSEEAAQVEAPAS. Positions 597–674 constitute a KIX domain; the sequence is NTSKEWIVED…TVDQILKKTL (78 aa). Residues 675-685 are compositionally biased toward basic and acidic residues; the sequence is KKDQRATEHNH. A disordered region spans residues 675–702; that stretch reads KKDQRATEHNHQQPTQSSDELAKNHEKN.

As to quaternary structure, self-associates. Interacts (via the LIR motifs) with lgg-1; the interaction is direct. Interacts (via the LIR motifs) with lgg-2; the interaction is direct. Interacts with pgl-3; interaction is enhanced in the presence of RNA. Interacts with epg-2; may be modulated by prmt-1. In terms of processing, degraded by autophagy.

The protein resides in the nucleus. It localises to the cytoplasm. Its subcellular location is the cytoplasmic granule. In terms of biological role, adapter protein that connects P-granules in somatic cells with the autophagic machinery. Association with other adapters such as epg-2 and P-granule components such as pgl-3 is required for the accumulation and degradation of P-granules by autophagy in somatic cells. This ensures exclusive localization of the P-granules in germ cells. This chain is Protein sepa-1, found in Caenorhabditis elegans.